The sequence spans 31 residues: Cyclotide vibi-H (31 aa).

Positions 1 to 31 (GLLPCAESCVYIPCLTTVIGCSCKSKVCYKN) form a cross-link, cyclopeptide (Gly-Asn). Intrachain disulfides connect Cys-5/Cys-21, Cys-9/Cys-23, and Cys-14/Cys-28.

Post-translationally, this is a cyclic peptide.

In terms of biological role, probably participates in a plant defense mechanism. Has cytotoxic activity, active against a human lymphoma cell line with an IC(50) of 1.6 uM. The sequence is that of Cyclotide vibi-H from Viola biflora (Yellow wood violet).